Consider the following 193-residue polypeptide: Cytidylate kinase (193 aa).

12–20 (GLAGSGTTT) serves as a coordination point for ATP.

The protein belongs to the cytidylate kinase family. Type 2 subfamily.

It is found in the cytoplasm. It carries out the reaction CMP + ATP = CDP + ADP. The enzyme catalyses dCMP + ATP = dCDP + ADP. The polypeptide is Cytidylate kinase (Thermococcus sibiricus (strain DSM 12597 / MM 739)).